The primary structure comprises 314 residues: 4-hydroxy-3-methylbut-2-enyl diphosphate reductase (314 aa).

C12 contacts [4Fe-4S] cluster. (2E)-4-hydroxy-3-methylbut-2-enyl diphosphate contacts are provided by H41 and H74. Dimethylallyl diphosphate contacts are provided by H41 and H74. Isopentenyl diphosphate-binding residues include H41 and H74. C96 contacts [4Fe-4S] cluster. H124 contributes to the (2E)-4-hydroxy-3-methylbut-2-enyl diphosphate binding site. H124 is a binding site for dimethylallyl diphosphate. An isopentenyl diphosphate-binding site is contributed by H124. E126 acts as the Proton donor in catalysis. T168 lines the (2E)-4-hydroxy-3-methylbut-2-enyl diphosphate pocket. C198 serves as a coordination point for [4Fe-4S] cluster. 4 residues coordinate (2E)-4-hydroxy-3-methylbut-2-enyl diphosphate: S226, S227, N228, and S270. S226, S227, N228, and S270 together coordinate dimethylallyl diphosphate. The isopentenyl diphosphate site is built by S226, S227, N228, and S270.

This sequence belongs to the IspH family. It depends on [4Fe-4S] cluster as a cofactor.

The enzyme catalyses isopentenyl diphosphate + 2 oxidized [2Fe-2S]-[ferredoxin] + H2O = (2E)-4-hydroxy-3-methylbut-2-enyl diphosphate + 2 reduced [2Fe-2S]-[ferredoxin] + 2 H(+). It carries out the reaction dimethylallyl diphosphate + 2 oxidized [2Fe-2S]-[ferredoxin] + H2O = (2E)-4-hydroxy-3-methylbut-2-enyl diphosphate + 2 reduced [2Fe-2S]-[ferredoxin] + 2 H(+). Its pathway is isoprenoid biosynthesis; dimethylallyl diphosphate biosynthesis; dimethylallyl diphosphate from (2E)-4-hydroxy-3-methylbutenyl diphosphate: step 1/1. It participates in isoprenoid biosynthesis; isopentenyl diphosphate biosynthesis via DXP pathway; isopentenyl diphosphate from 1-deoxy-D-xylulose 5-phosphate: step 6/6. Its function is as follows. Catalyzes the conversion of 1-hydroxy-2-methyl-2-(E)-butenyl 4-diphosphate (HMBPP) into a mixture of isopentenyl diphosphate (IPP) and dimethylallyl diphosphate (DMAPP). Acts in the terminal step of the DOXP/MEP pathway for isoprenoid precursor biosynthesis. This is 4-hydroxy-3-methylbut-2-enyl diphosphate reductase from Ectopseudomonas mendocina (strain ymp) (Pseudomonas mendocina).